We begin with the raw amino-acid sequence, 240 residues long: Glycerol uptake facilitator protein 3 (240 aa).

Transmembrane regions (helical) follow at residues 11–31 and 41–61; these read LGEFLGTFILILLGDGVVAGV and AGWVAITLGWGFAVTMGVYAS. The short motif at 70–72 is the NPA 1 element; that stretch reads NPA. 3 consecutive transmembrane segments (helical) span residues 88-108, 137-157, and 162-182; these read VIPYSAAQIAGGVIGGLVVWL, FWNFISEVIGTFVLVFGLLAF, and FTAGLNPIVVGILIIAIGLSL. The short motif at 191–193 is the NPA 2 element; that stretch reads NPA. The chain crosses the membrane as a helical span at residues 219–239; it reads WVPIAGPLVGGALGALLFNVL.

It belongs to the MIP/aquaporin (TC 1.A.8) family.

It is found in the cell membrane. Transporter that facilitates the transmembrane diffusion of water, dihydroxyacetone, glycerol and H(2)O(2). Is not permeable to urea and D/L-lactic acid. The protein is Glycerol uptake facilitator protein 3 of Lactiplantibacillus plantarum (strain ATCC BAA-793 / NCIMB 8826 / WCFS1) (Lactobacillus plantarum).